A 388-amino-acid polypeptide reads, in one-letter code: 1-deoxy-D-xylulose 5-phosphate reductoisomerase (388 aa).

NADPH-binding residues include Thr-13, Gly-14, Ser-15, Ile-16, Arg-40, Asn-41, and Asn-124. Lys-125 contributes to the 1-deoxy-D-xylulose 5-phosphate binding site. Glu-126 contributes to the NADPH binding site. Residue Asp-150 coordinates Mn(2+). Positions 151, 152, 176, and 199 each coordinate 1-deoxy-D-xylulose 5-phosphate. Glu-152 contacts Mn(2+). Residue Gly-205 participates in NADPH binding. 1-deoxy-D-xylulose 5-phosphate contacts are provided by Ser-212, Asn-217, Lys-218, and Glu-221. Residue Glu-221 coordinates Mn(2+).

The protein belongs to the DXR family. As to quaternary structure, homodimer. Mg(2+) is required as a cofactor. Mn(2+) serves as cofactor. Requires Co(2+) as cofactor.

The enzyme catalyses 2-C-methyl-D-erythritol 4-phosphate + NADP(+) = 1-deoxy-D-xylulose 5-phosphate + NADPH + H(+). It functions in the pathway isoprenoid biosynthesis; isopentenyl diphosphate biosynthesis via DXP pathway; isopentenyl diphosphate from 1-deoxy-D-xylulose 5-phosphate: step 1/6. With respect to regulation, competitively inhibited by the antibiotic fosmidomycin. Functionally, catalyzes the NADPH-dependent rearrangement and reduction of 1-deoxy-D-xylulose-5-phosphate (DXP) to 2-C-methyl-D-erythritol 4-phosphate (MEP). Cannot use NADH instead of NADPH as the reducing agent. This Zymomonas mobilis subsp. mobilis (strain ATCC 31821 / ZM4 / CP4) protein is 1-deoxy-D-xylulose 5-phosphate reductoisomerase.